Reading from the N-terminus, the 173-residue chain is Adenine phosphoribosyltransferase (173 aa).

This sequence belongs to the purine/pyrimidine phosphoribosyltransferase family. In terms of assembly, homodimer.

The protein localises to the cytoplasm. It carries out the reaction AMP + diphosphate = 5-phospho-alpha-D-ribose 1-diphosphate + adenine. Its pathway is purine metabolism; AMP biosynthesis via salvage pathway; AMP from adenine: step 1/1. Its function is as follows. Catalyzes a salvage reaction resulting in the formation of AMP, that is energically less costly than de novo synthesis. The sequence is that of Adenine phosphoribosyltransferase from Ureaplasma parvum serovar 3 (strain ATCC 27815 / 27 / NCTC 11736).